The primary structure comprises 386 residues: Demethylsterigmatocystin 6-O-methyltransferase (386 aa).

137 to 150 contributes to the substrate binding site; the sequence is FDISGPCTQILPDF. A substrate binding region spans residues 177–197; sequence MFEWMPQHPKHMESLGHLMAL. S-adenosyl-L-methionine is bound by residues 228–229, Asp253, 273–274, and Arg289; these read GG and NF. Residue His293 is the Proton acceptor of the active site.

This sequence belongs to the class I-like SAM-binding methyltransferase superfamily. Cation-independent O-methyltransferase family. COMT subfamily.

The enzyme catalyses 6-demethylsterigmatocystin + S-adenosyl-L-methionine = sterigmatocystin + S-adenosyl-L-homocysteine + H(+). It participates in mycotoxin biosynthesis; aflatoxin biosynthesis. In terms of biological role, catalyzes both the conversion of demethylsterigmatocystin (DMST) to sterigmatocystin and the conversion of dihydrodemethylsterigmatocystin to dihydrosterigmatocystin (DHDMST) during aflatoxin biosynthesis. The protein is Demethylsterigmatocystin 6-O-methyltransferase (omtB) of Aspergillus flavus (strain ATCC 200026 / FGSC A1120 / IAM 13836 / NRRL 3357 / JCM 12722 / SRRC 167).